A 422-amino-acid chain; its full sequence is Pre-B-cell leukemia transcription factor 2 (422 aa).

Residues 1–43 form a disordered region; the sequence is MDEQGRLMQARGVGIPGHPIHGGPQTLTPHPMHEPPADNGEPR. Residues 31-43 are compositionally biased toward basic and acidic residues; that stretch reads PMHEPPADNGEPR. Positions 42-236 constitute a PBC domain; sequence PRKQDIGDIL…VMILRSRFLD (195 aa). The segment at 49 to 128 is PBC-A; the sequence is DILQQIMTIT…EGVAGPEKGG (80 aa). A PBC-B region spans residues 131–236; that stretch reads AAAAAAAAAS…VMILRSRFLD (106 aa). A DNA-binding region (homeobox) is located at residues 237–299; the sequence is ARRKRRNFSK…NKRIRYKKNI (63 aa). Disordered regions lie at residues 319–341 and 353–422; these read QGGH…GSFN and QGLN…DTSN. A compositionally biased stretch (polar residues) spans 401–410; that stretch reads VTPSSVTSPT.

The protein belongs to the TALE/PBX homeobox family.

It localises to the nucleus. In terms of biological role, transcriptional activator that binds the sequence 5'-ATCAATCAA-3'. The sequence is that of Pre-B-cell leukemia transcription factor 2 from Xenopus tropicalis (Western clawed frog).